The sequence spans 163 residues: NADH-quinone oxidoreductase subunit I (163 aa).

4Fe-4S ferredoxin-type domains are found at residues 53 to 83 (LRRYPNGEERCIACKLCEAICPAQAITIEAG) and 94 to 123 (VRYDIDMVKCIYCGFCQEACPVDAIVEGPN). The [4Fe-4S] cluster site is built by Cys63, Cys66, Cys69, Cys73, Cys103, Cys106, Cys109, and Cys113.

This sequence belongs to the complex I 23 kDa subunit family. In terms of assembly, NDH-1 is composed of 14 different subunits. Subunits NuoA, H, J, K, L, M, N constitute the membrane sector of the complex. It depends on [4Fe-4S] cluster as a cofactor.

The protein localises to the cell inner membrane. The catalysed reaction is a quinone + NADH + 5 H(+)(in) = a quinol + NAD(+) + 4 H(+)(out). Its function is as follows. NDH-1 shuttles electrons from NADH, via FMN and iron-sulfur (Fe-S) centers, to quinones in the respiratory chain. The immediate electron acceptor for the enzyme in this species is believed to be ubiquinone. Couples the redox reaction to proton translocation (for every two electrons transferred, four hydrogen ions are translocated across the cytoplasmic membrane), and thus conserves the redox energy in a proton gradient. The protein is NADH-quinone oxidoreductase subunit I of Brucella suis (strain ATCC 23445 / NCTC 10510).